Reading from the N-terminus, the 178-residue chain is Thymidine kinase (178 aa).

Residue 13 to 20 (GPMFAGKS) coordinates ATP. Glutamate 85 functions as the Proton acceptor in the catalytic mechanism. Phenylalanine 115 serves as a coordination point for substrate. Residues cysteine 140 and cysteine 143 each coordinate Zn(2+). 159–163 (IEIIG) lines the substrate pocket. Cysteine 172 and cysteine 175 together coordinate Zn(2+).

It belongs to the thymidine kinase family.

It catalyses the reaction thymidine + ATP = dTMP + ADP + H(+). This is Thymidine kinase (TK) from Myxoma virus (strain Lausanne) (MYXV).